The chain runs to 184 residues: MKRQSEWIRVESIRGARRISNFFWAFILILGALGFLLVGSSSYLGRDLIPLLPSQQIVFIPQGIVMCFYGIAGISIGFYLGFAISWDIGNGYNLFDKQRGIVRIFRWGFPGENRRICIQFFMKDIQAIGLEIREGFYSRRIIYMRMKGQQKIFLTHISENSTLKEMEEKAANLARFMCVSIEGI.

Helical transmembrane passes span 21 to 43 and 58 to 80; these read NFFW…SSSY and VFIP…GFYL.

The protein belongs to the Ycf4 family.

It localises to the plastid. The protein resides in the chloroplast thylakoid membrane. Functionally, seems to be required for the assembly of the photosystem I complex. This Psilotum nudum (Whisk fern) protein is Photosystem I assembly protein Ycf4.